The chain runs to 345 residues: NADPH dehydrogenase (345 aa).

23-26 (SPMC) provides a ligand contact to FMN. Tyr-28 lines the substrate pocket. FMN-binding residues include Ala-60 and Gln-102. 164–167 (HGAH) provides a ligand contact to substrate. FMN is bound by residues Arg-215 and 307-308 (GR).

Belongs to the NADH:flavin oxidoreductase/NADH oxidase family. NamA subfamily. Homotetramer. FMN serves as cofactor.

It carries out the reaction A + NADPH + H(+) = AH2 + NADP(+). In terms of biological role, catalyzes the reduction of the double bond of an array of alpha,beta-unsaturated aldehydes and ketones. It also reduces the nitro group of nitroester and nitroaromatic compounds. It could have a role in detoxification processes. This Bacillus cereus (strain B4264) protein is NADPH dehydrogenase.